Consider the following 411-residue polypeptide: Serine hydroxymethyltransferase (411 aa).

(6S)-5,6,7,8-tetrahydrofolate is bound by residues Leu119 and 123–125 (GHL). An N6-(pyridoxal phosphate)lysine modification is found at Lys228.

Belongs to the SHMT family. Homodimer. Requires pyridoxal 5'-phosphate as cofactor.

It is found in the cytoplasm. It catalyses the reaction (6R)-5,10-methylene-5,6,7,8-tetrahydrofolate + glycine + H2O = (6S)-5,6,7,8-tetrahydrofolate + L-serine. It participates in one-carbon metabolism; tetrahydrofolate interconversion. It functions in the pathway amino-acid biosynthesis; glycine biosynthesis; glycine from L-serine: step 1/1. In terms of biological role, catalyzes the reversible interconversion of serine and glycine with tetrahydrofolate (THF) serving as the one-carbon carrier. This reaction serves as the major source of one-carbon groups required for the biosynthesis of purines, thymidylate, methionine, and other important biomolecules. Also exhibits THF-independent aldolase activity toward beta-hydroxyamino acids, producing glycine and aldehydes, via a retro-aldol mechanism. The sequence is that of Serine hydroxymethyltransferase from Clostridium kluyveri (strain NBRC 12016).